We begin with the raw amino-acid sequence, 190 residues long: Large ribosomal subunit protein bL9 (190 aa).

Belongs to the bacterial ribosomal protein bL9 family.

In terms of biological role, binds to the 23S rRNA. The chain is Large ribosomal subunit protein bL9 from Methylorubrum extorquens (strain CM4 / NCIMB 13688) (Methylobacterium extorquens).